A 450-amino-acid chain; its full sequence is 23S rRNA (uracil(1939)-C(5))-methyltransferase RlmD (450 aa).

Positions 15-73 (KAVPAKNLTVTVASLDPFGQGVARHEGKTVFVTGVLPGEQAEVQLTEEKRQFSHAKLKR) constitute a TRAM domain. [4Fe-4S] cluster contacts are provided by C86, C92, C95, and C173. S-adenosyl-L-methionine-binding residues include Q276, F305, N310, E326, N353, and D374. C400 serves as the catalytic Nucleophile.

It belongs to the class I-like SAM-binding methyltransferase superfamily. RNA M5U methyltransferase family. RlmD subfamily.

It catalyses the reaction uridine(1939) in 23S rRNA + S-adenosyl-L-methionine = 5-methyluridine(1939) in 23S rRNA + S-adenosyl-L-homocysteine + H(+). Its function is as follows. Catalyzes the formation of 5-methyl-uridine at position 1939 (m5U1939) in 23S rRNA. The sequence is that of 23S rRNA (uracil(1939)-C(5))-methyltransferase RlmD from Pectobacterium atrosepticum (strain SCRI 1043 / ATCC BAA-672) (Erwinia carotovora subsp. atroseptica).